A 405-amino-acid chain; its full sequence is Argininosuccinate synthase (405 aa).

ATP is bound at residue 11 to 19 (AYSGGLDTS). Y90 is a binding site for L-citrulline. Position 119 (G119) interacts with ATP. T121, N125, and D126 together coordinate L-aspartate. Position 125 (N125) interacts with L-citrulline. L-citrulline contacts are provided by R129, S178, S187, E263, and Y275.

The protein belongs to the argininosuccinate synthase family. Type 1 subfamily. In terms of assembly, homotetramer.

The protein resides in the cytoplasm. It carries out the reaction L-citrulline + L-aspartate + ATP = 2-(N(omega)-L-arginino)succinate + AMP + diphosphate + H(+). The protein operates within amino-acid biosynthesis; L-arginine biosynthesis; L-arginine from L-ornithine and carbamoyl phosphate: step 2/3. The protein is Argininosuccinate synthase of Legionella pneumophila (strain Paris).